Here is a 119-residue protein sequence, read N- to C-terminus: Host cell factor C1 regulator 1 (119 aa).

The tract at residues 1–34 (MILQQPLERGPQGRAQRDPRAASGASGGLDAREP) is disordered. The segment at 57–60 (DHPY) is interaction with HCFC1. Residues 91–100 (IPEALRLLRL) carry the Nuclear export signal motif.

In terms of assembly, interacts with HCFC1.

It is found in the cytoplasm. The protein resides in the nucleus. In terms of biological role, regulates HCFC1 activity by modulating its subcellular localization. Overexpression of HCFC1R1 leads to accumulation of HCFC1 in the cytoplasm. HCFC1R1-mediated export may provide the pool of cytoplasmic HCFC1 required for import of virion-derived VP16 into the nucleus. The polypeptide is Host cell factor C1 regulator 1 (HCFC1R1) (Bos taurus (Bovine)).